The chain runs to 232 residues: Ubiquinone biosynthesis O-methyltransferase (232 aa).

S-adenosyl-L-methionine-binding residues include arginine 36, glycine 55, aspartate 76, and leucine 120.

The protein belongs to the methyltransferase superfamily. UbiG/COQ3 family.

It catalyses the reaction a 3-demethylubiquinol + S-adenosyl-L-methionine = a ubiquinol + S-adenosyl-L-homocysteine + H(+). The enzyme catalyses a 3-(all-trans-polyprenyl)benzene-1,2-diol + S-adenosyl-L-methionine = a 2-methoxy-6-(all-trans-polyprenyl)phenol + S-adenosyl-L-homocysteine + H(+). It functions in the pathway cofactor biosynthesis; ubiquinone biosynthesis. In terms of biological role, O-methyltransferase that catalyzes the 2 O-methylation steps in the ubiquinone biosynthetic pathway. The polypeptide is Ubiquinone biosynthesis O-methyltransferase (Pseudomonas putida (strain W619)).